The primary structure comprises 329 residues: tRNA-modifying protein YgfZ (329 aa).

W27 and W189 together coordinate folate.

This sequence belongs to the tRNA-modifying YgfZ family.

It is found in the cytoplasm. Folate-binding protein involved in regulating the level of ATP-DnaA and in the modification of some tRNAs. It is probably a key factor in regulatory networks that act via tRNA modification, such as initiation of chromosomal replication. This Cronobacter sakazakii (strain ATCC BAA-894) (Enterobacter sakazakii) protein is tRNA-modifying protein YgfZ.